Here is a 105-residue protein sequence, read N- to C-terminus: MDMYKKIGVVGDKDSVLAFKALGIDVFPVVEDEEARKTIDKLAMTGYAVIFVTEHVAKNIEETIERYTRQVLPAVILIPSNQGTLNIGKQRISDNVEKAVGVNIL.

It belongs to the V-ATPase F subunit family.

In terms of biological role, produces ATP from ADP in the presence of a proton gradient across the membrane. The chain is V-type ATP synthase subunit F from Clostridium perfringens (strain 13 / Type A).